We begin with the raw amino-acid sequence, 565 residues long: Periplasmic trehalase (565 aa).

Positions 1–30 are cleaved as a signal peptide; the sequence is MKSPAPSRPQKMALIPACIFLCFAALSVQA. Substrate is bound by residues Arg-152, 159–160, Asn-196, 205–207, 277–279, and Gly-310; these read WD, RSQ, and RPE. Catalysis depends on proton donor/acceptor residues Asp-312 and Glu-496. Position 511 (Glu-511) interacts with substrate. The interval 539–565 is disordered; that stretch reads CDNVPATRPLSESTTQPVKQKEAEPTP.

Belongs to the glycosyl hydrolase 37 family. As to quaternary structure, monomer.

The protein localises to the periplasm. It catalyses the reaction alpha,alpha-trehalose + H2O = alpha-D-glucose + beta-D-glucose. Functionally, provides the cells with the ability to utilize trehalose at high osmolarity by splitting it into glucose molecules that can subsequently be taken up by the phosphotransferase-mediated uptake system. This chain is Periplasmic trehalase, found in Escherichia coli O17:K52:H18 (strain UMN026 / ExPEC).